The primary structure comprises 245 residues: 4-hydroxy-tetrahydrodipicolinate reductase (245 aa).

Residues 8–13 (GSTGKM), 78–80 (GTT), and 102–105 (SANM) contribute to the NAD(+) site. The active-site Proton donor/acceptor is the H134. H135 is a binding site for (S)-2,3,4,5-tetrahydrodipicolinate. The active-site Proton donor is the K138. 144–145 (GT) lines the (S)-2,3,4,5-tetrahydrodipicolinate pocket.

This sequence belongs to the DapB family.

It localises to the cytoplasm. The enzyme catalyses (S)-2,3,4,5-tetrahydrodipicolinate + NAD(+) + H2O = (2S,4S)-4-hydroxy-2,3,4,5-tetrahydrodipicolinate + NADH + H(+). It carries out the reaction (S)-2,3,4,5-tetrahydrodipicolinate + NADP(+) + H2O = (2S,4S)-4-hydroxy-2,3,4,5-tetrahydrodipicolinate + NADPH + H(+). It functions in the pathway amino-acid biosynthesis; L-lysine biosynthesis via DAP pathway; (S)-tetrahydrodipicolinate from L-aspartate: step 4/4. In terms of biological role, catalyzes the conversion of 4-hydroxy-tetrahydrodipicolinate (HTPA) to tetrahydrodipicolinate. In Rickettsia akari (strain Hartford), this protein is 4-hydroxy-tetrahydrodipicolinate reductase.